The following is a 430-amino-acid chain: Adenylosuccinate synthetase (430 aa).

GTP-binding positions include 12–18 (GDEGKGK) and 40–42 (GHT). Aspartate 13 (proton acceptor) is an active-site residue. Residues aspartate 13 and glycine 40 each contribute to the Mg(2+) site. IMP is bound by residues 13 to 16 (DEGK), 38 to 41 (NAGH), threonine 130, arginine 144, glutamine 224, and threonine 239. Histidine 41 acts as the Proton donor in catalysis. A disordered region spans residues 277-298 (PFPTEQDNETGRKIGERGREFG). Basic and acidic residues predominate over residues 285–296 (ETGRKIGERGRE). 299 to 305 (TNTGRPR) contributes to the substrate binding site. Arginine 303 is a binding site for IMP. GTP contacts are provided by residues arginine 305, 331–333 (KLD), and 413–415 (STS).

This sequence belongs to the adenylosuccinate synthetase family. In terms of assembly, homodimer. The cofactor is Mg(2+).

Its subcellular location is the cytoplasm. The enzyme catalyses IMP + L-aspartate + GTP = N(6)-(1,2-dicarboxyethyl)-AMP + GDP + phosphate + 2 H(+). Its pathway is purine metabolism; AMP biosynthesis via de novo pathway; AMP from IMP: step 1/2. In terms of biological role, plays an important role in the de novo pathway of purine nucleotide biosynthesis. Catalyzes the first committed step in the biosynthesis of AMP from IMP. The protein is Adenylosuccinate synthetase of Bradyrhizobium sp. (strain BTAi1 / ATCC BAA-1182).